We begin with the raw amino-acid sequence, 133 residues long: ATP synthase epsilon chain (133 aa).

This sequence belongs to the ATPase epsilon chain family. In terms of assembly, F-type ATPases have 2 components, CF(1) - the catalytic core - and CF(0) - the membrane proton channel. CF(1) has five subunits: alpha(3), beta(3), gamma(1), delta(1), epsilon(1). CF(0) has three main subunits: a, b and c.

The protein localises to the cell membrane. Functionally, produces ATP from ADP in the presence of a proton gradient across the membrane. The protein is ATP synthase epsilon chain of Staphylococcus haemolyticus (strain JCSC1435).